Consider the following 258-residue polypeptide: Regulatory protein RecX (258 aa).

It belongs to the RecX family.

It localises to the cytoplasm. In terms of biological role, modulates RecA activity. In Streptococcus gordonii (strain Challis / ATCC 35105 / BCRC 15272 / CH1 / DL1 / V288), this protein is Regulatory protein RecX.